A 461-amino-acid chain; its full sequence is Argininosuccinate lyase (461 aa).

The protein belongs to the lyase 1 family. Argininosuccinate lyase subfamily.

Its subcellular location is the cytoplasm. The enzyme catalyses 2-(N(omega)-L-arginino)succinate = fumarate + L-arginine. Its pathway is amino-acid biosynthesis; L-arginine biosynthesis; L-arginine from L-ornithine and carbamoyl phosphate: step 3/3. In Aeromonas hydrophila subsp. hydrophila (strain ATCC 7966 / DSM 30187 / BCRC 13018 / CCUG 14551 / JCM 1027 / KCTC 2358 / NCIMB 9240 / NCTC 8049), this protein is Argininosuccinate lyase.